A 647-amino-acid chain; its full sequence is Denticleless protein homolog (647 aa).

WD repeat units lie at residues 48–88 (AAAV…KQSS), 95–134 (AHDNAVFDIAWVPGTNCLVTASGDQTARLWDVITGDLLGT), 137–177 (GHQC…KDGF), 209–248 (DSQQGVTVVLFCDETKLISSGAVDGIIKMWDLRRNYTAYH), 264–303 (TRKLGYSGLSLDYTGSRLFSNCTDDNIYMFNISGLKTTPV), 308–349 (GHSN…QAPM), and 353–393 (GHSQ…EGEN). 2 consecutive short sequence motifs (DDB1-binding motif) follow at residues 167–170 (WDTR) and 238–241 (WDLR). Disordered stretches follow at residues 410-487 (QSPN…SKSP) and 534-647 (KRSR…RTQD). Composition is skewed to polar residues over residues 426–443 (PSKNPGSVRSVSLASPQP) and 471–486 (KMPSSLQQWISRSSKS). Positions 543 to 558 (LKKEDSFGLESEKRLG) are enriched in basic and acidic residues. Residues 586-600 (KGSAQPKSPSSGSSQ) show a composition bias toward low complexity.

This sequence belongs to the WD repeat cdt2 family. Component of the DCX(DTL) E3 ubiquitin ligase complex, at least composed of cul4 (cul4a or cul4b), ddb1, dtl/cdt2 and rbx1.

The protein resides in the nucleus. The protein localises to the cytoplasm. Its subcellular location is the cytoskeleton. It localises to the microtubule organizing center. It is found in the centrosome. The protein resides in the chromosome. The protein operates within protein modification; protein ubiquitination. Functionally, substrate-specific adapter of a DCX (DDB1-CUL4-X-box) E3 ubiquitin-protein ligase complex required for cell cycle control, DNA damage response and translesion DNA synthesis. The DCX(DTL) complex, also named CRL4(CDT2) complex, mediates the polyubiquitination and subsequent degradation of CDT1, CDKN1A/p21(CIP1), KMT5A and SDE2. CDT1 degradation in response to DNA damage is necessary to ensure proper cell cycle regulation of DNA replication. CDKN1A/p21(CIP1) degradation during S phase or following UV irradiation is essential to control replication licensing. KMT5A degradation is also important for a proper regulation of mechanisms such as TGF-beta signaling, cell cycle progression, DNA repair and cell migration. Most substrates require their interaction with PCNA for their polyubiquitination: substrates interact with PCNA via their PIP-box, and those containing the 'K+4' motif in the PIP box, recruit the DCX(DTL) complex, leading to their degradation. In undamaged proliferating cells, the DCX(DTL) complex also promotes the 'Lys-164' monoubiquitination of PCNA, thereby being involved in PCNA-dependent translesion DNA synthesis. May play a role in the regulation of the circadian clock. The polypeptide is Denticleless protein homolog (dtl) (Danio rerio (Zebrafish)).